The sequence spans 437 residues: Glutamate-1-semialdehyde 2,1-aminomutase (437 aa).

Lys-274 carries the post-translational modification N6-(pyridoxal phosphate)lysine.

This sequence belongs to the class-III pyridoxal-phosphate-dependent aminotransferase family. HemL subfamily. As to quaternary structure, homodimer. Requires pyridoxal 5'-phosphate as cofactor.

Its subcellular location is the cytoplasm. The catalysed reaction is (S)-4-amino-5-oxopentanoate = 5-aminolevulinate. It functions in the pathway porphyrin-containing compound metabolism; protoporphyrin-IX biosynthesis; 5-aminolevulinate from L-glutamyl-tRNA(Glu): step 2/2. The chain is Glutamate-1-semialdehyde 2,1-aminomutase from Paracidovorax citrulli (strain AAC00-1) (Acidovorax citrulli).